A 128-amino-acid polypeptide reads, in one-letter code: ATP synthase epsilon chain (128 aa).

This sequence belongs to the ATPase epsilon chain family. In terms of assembly, F-type ATPases have 2 components, CF(1) - the catalytic core - and CF(0) - the membrane proton channel. CF(1) has five subunits: alpha(3), beta(3), gamma(1), delta(1), epsilon(1). CF(0) has three main subunits: a, b and c.

Its subcellular location is the cell inner membrane. Functionally, produces ATP from ADP in the presence of a proton gradient across the membrane. The chain is ATP synthase epsilon chain from Sulfurovum sp. (strain NBC37-1).